Here is a 249-residue protein sequence, read N- to C-terminus: Probable WRKY transcription factor 64 (249 aa).

Residues 97 to 165 (SPTPRPDDGF…YLGKHVCKAV (69 aa)) constitute a DNA-binding region (WRKY).

The protein belongs to the WRKY group III family.

Its subcellular location is the nucleus. Transcription factor. Interacts specifically with the W box (5'-(T)TGAC[CT]-3'), a frequently occurring elicitor-responsive cis-acting element. The sequence is that of Probable WRKY transcription factor 64 (WRKY64) from Arabidopsis thaliana (Mouse-ear cress).